The sequence spans 455 residues: GTPase Der (455 aa).

EngA-type G domains are found at residues 4–169 and 178–353; these read PVVA…PPKD and IQMA…EQHR. GTP contacts are provided by residues 10–17, 57–61, 120–123, 184–191, 231–235, and 296–299; these read GRPNVGKS, DTGGL, NKCE, DTAGI, and NKWD. The KH-like domain maps to 354–439; the sequence is RRVSTSVVNE…PVKLYWRGKQ (86 aa).

This sequence belongs to the TRAFAC class TrmE-Era-EngA-EngB-Septin-like GTPase superfamily. EngA (Der) GTPase family. In terms of assembly, associates with the 50S ribosomal subunit.

Functionally, GTPase that plays an essential role in the late steps of ribosome biogenesis. The chain is GTPase Der from Parasynechococcus marenigrum (strain WH8102).